The primary structure comprises 439 residues: UDP-N-acetylglucosamine--peptide N-acetylglucosaminyltransferase stabilizing protein GtfB (439 aa).

This sequence belongs to the GtfB family. Interacts with glycosyltransferase GtfA (Gtf2); probably forms a heterotetramer with 2 subunits each of GtfA and GtfB. Part of the accessory SecA2/SecY2 protein translocation apparatus.

The protein localises to the cell membrane. It participates in protein modification; protein glycosylation. Required for the polymorphic O-glycosylation of the serine-rich repeat protein Fap1. A stabilizing protein that is part of the accessory SecA2/SecY2 system specifically required to export Fap1, a serine-rich fimbrial adhesin encoded upstream in the same operon. The GtfA-GtfB (Gtf1-Gtf2 in this bacteria) complex adds GlcNAc from UDP-GlcNAc to Fap1, attaching the first sugar residue. Cannot use not UDP-Glc as substrate. Stabilizes the glycosylation activity of GtfA, causing it to partially localize to the cellular membrane where it is more protease resistant. The sequence is that of UDP-N-acetylglucosamine--peptide N-acetylglucosaminyltransferase stabilizing protein GtfB from Streptococcus parasanguinis.